A 259-amino-acid polypeptide reads, in one-letter code: UPF0758 protein Bphyt_3148 (259 aa).

The MPN domain maps to Leu137–Pro259. Positions 208, 210, and 221 each coordinate Zn(2+). A JAMM motif motif is present at residues His208–Asp221.

It belongs to the UPF0758 family.

The protein is UPF0758 protein Bphyt_3148 of Paraburkholderia phytofirmans (strain DSM 17436 / LMG 22146 / PsJN) (Burkholderia phytofirmans).